An 81-amino-acid polypeptide reads, in one-letter code: Cytotoxin 2b (81 aa).

A signal peptide spans 1–21; it reads MKTLLLTLVVVTTVCLDLGYT. 4 cysteine pairs are disulfide-bonded: cysteine 24-cysteine 42, cysteine 35-cysteine 59, cysteine 63-cysteine 74, and cysteine 75-cysteine 80.

This sequence belongs to the three-finger toxin family. Short-chain subfamily. Type IA cytotoxin sub-subfamily. Monomer in solution; Homodimer and oligomer in the presence of negatively charged lipids forming a pore with a size ranging between 20 and 30 Angstroms. In terms of tissue distribution, expressed by the venom gland.

It is found in the secreted. Its subcellular location is the target cell membrane. In terms of biological role, shows cytolytic activity on many different cells by forming pore in lipid membranes. In vivo, increases heart rate or kills the animal by cardiac arrest. In addition, it binds to heparin with high affinity, interacts with Kv channel-interacting protein 1 (KCNIP1) in a calcium-independent manner, and binds to integrin alpha-V/beta-3 (ITGAV/ITGB3) with moderate affinity. The protein is Cytotoxin 2b of Naja sputatrix (Malayan spitting cobra).